A 397-amino-acid chain; its full sequence is Phosphoglycerate kinase (397 aa).

Substrate is bound by residues 21–23 (DFN), Arg37, 60–63 (HLGR), Arg119, and Arg152. Residues Lys203, Gly294, Glu325, and 354–357 (GGDS) contribute to the ATP site.

This sequence belongs to the phosphoglycerate kinase family. As to quaternary structure, monomer.

The protein localises to the cytoplasm. It catalyses the reaction (2R)-3-phosphoglycerate + ATP = (2R)-3-phospho-glyceroyl phosphate + ADP. The protein operates within carbohydrate degradation; glycolysis; pyruvate from D-glyceraldehyde 3-phosphate: step 2/5. The polypeptide is Phosphoglycerate kinase (Chlorobium luteolum (strain DSM 273 / BCRC 81028 / 2530) (Pelodictyon luteolum)).